The chain runs to 92 residues: UPF0358 protein SH1840 (92 aa).

Belongs to the UPF0358 family.

This Staphylococcus haemolyticus (strain JCSC1435) protein is UPF0358 protein SH1840.